We begin with the raw amino-acid sequence, 185 residues long: Elongation factor P (185 aa).

The protein belongs to the elongation factor P family.

It is found in the cytoplasm. It participates in protein biosynthesis; polypeptide chain elongation. Its function is as follows. Involved in peptide bond synthesis. Stimulates efficient translation and peptide-bond synthesis on native or reconstituted 70S ribosomes in vitro. Probably functions indirectly by altering the affinity of the ribosome for aminoacyl-tRNA, thus increasing their reactivity as acceptors for peptidyl transferase. This is Elongation factor P from Geobacillus sp. (strain WCH70).